The chain runs to 268 residues: Phosphatidylglycerol--prolipoprotein diacylglyceryl transferase (268 aa).

Transmembrane regions (helical) follow at residues 23–43, 62–82, 97–117, 132–152, 179–199, 206–226, and 241–261; these read IGLR…RWLA, LLFN…VFFY, VWEG…AMIW, FVAP…FINL, SQLY…NIFI, ASVA…VEYV, and GQAL…WAYS. Arginine 145 contacts a 1,2-diacyl-sn-glycero-3-phospho-(1'-sn-glycerol).

Belongs to the Lgt family.

The protein resides in the cell inner membrane. It catalyses the reaction L-cysteinyl-[prolipoprotein] + a 1,2-diacyl-sn-glycero-3-phospho-(1'-sn-glycerol) = an S-1,2-diacyl-sn-glyceryl-L-cysteinyl-[prolipoprotein] + sn-glycerol 1-phosphate + H(+). It functions in the pathway protein modification; lipoprotein biosynthesis (diacylglyceryl transfer). In terms of biological role, catalyzes the transfer of the diacylglyceryl group from phosphatidylglycerol to the sulfhydryl group of the N-terminal cysteine of a prolipoprotein, the first step in the formation of mature lipoproteins. This chain is Phosphatidylglycerol--prolipoprotein diacylglyceryl transferase, found in Haemophilus influenzae (strain 86-028NP).